The sequence spans 71 residues: Small ribosomal subunit protein bS21 (71 aa).

This sequence belongs to the bacterial ribosomal protein bS21 family.

This is Small ribosomal subunit protein bS21 from Pseudoalteromonas atlantica (strain T6c / ATCC BAA-1087).